Here is a 643-residue protein sequence, read N- to C-terminus: Phosphomethylpyrimidine synthase (643 aa).

Substrate contacts are provided by residues Asn-248, Met-277, Tyr-306, His-342, 362 to 364 (SRG), 403 to 406 (DGLR), and Glu-442. His-446 provides a ligand contact to Zn(2+). Tyr-469 serves as a coordination point for substrate. His-510 provides a ligand contact to Zn(2+). Positions 590, 593, and 598 each coordinate [4Fe-4S] cluster.

The protein belongs to the ThiC family. Homodimer. It depends on [4Fe-4S] cluster as a cofactor.

The catalysed reaction is 5-amino-1-(5-phospho-beta-D-ribosyl)imidazole + S-adenosyl-L-methionine = 4-amino-2-methyl-5-(phosphooxymethyl)pyrimidine + CO + 5'-deoxyadenosine + formate + L-methionine + 3 H(+). It participates in cofactor biosynthesis; thiamine diphosphate biosynthesis. In terms of biological role, catalyzes the synthesis of the hydroxymethylpyrimidine phosphate (HMP-P) moiety of thiamine from aminoimidazole ribotide (AIR) in a radical S-adenosyl-L-methionine (SAM)-dependent reaction. The protein is Phosphomethylpyrimidine synthase of Burkholderia multivorans (strain ATCC 17616 / 249).